The following is a 426-amino-acid chain: Glutamate-1-semialdehyde 2,1-aminomutase (426 aa).

The residue at position 265 (Lys-265) is an N6-(pyridoxal phosphate)lysine.

The protein belongs to the class-III pyridoxal-phosphate-dependent aminotransferase family. HemL subfamily. As to quaternary structure, homodimer. Pyridoxal 5'-phosphate serves as cofactor.

Its subcellular location is the cytoplasm. The enzyme catalyses (S)-4-amino-5-oxopentanoate = 5-aminolevulinate. It participates in porphyrin-containing compound metabolism; protoporphyrin-IX biosynthesis; 5-aminolevulinate from L-glutamyl-tRNA(Glu): step 2/2. This is Glutamate-1-semialdehyde 2,1-aminomutase from Alcanivorax borkumensis (strain ATCC 700651 / DSM 11573 / NCIMB 13689 / SK2).